The following is an 86-amino-acid chain: Large ribosomal subunit protein eL20 (86 aa).

This sequence belongs to the eukaryotic ribosomal protein eL20 family. In terms of assembly, part of the 50S ribosomal subunit. Binds 23S rRNA.

This Metallosphaera sedula (strain ATCC 51363 / DSM 5348 / JCM 9185 / NBRC 15509 / TH2) protein is Large ribosomal subunit protein eL20.